The chain runs to 316 residues: MINFNNVKIFSGNSNLELAKKIAEKAGLQLGKAEIQRFKDGEVYIEIEETVRGRDVFVVQSTSEPVNENLMELLIFVDALKRASAKTINVIIPYYGYARQDRKSKPREPITSKLVANLLTTAGVNRVVAMDLHADQIQGFFDIPLDHMQALPLMARYFKEKGFKGDEVVVVSPDVGGVKRARKLAEKLDCKIAIIDKRRPKPNMSEVMNLIGEVEGKIAIFIDDMIDTAGTITNGADAIAQRGAKEVYACCTHAVFSDPAIERLEKSVLKEIVITDSIALPERKKIDKIKILSVDSVFANAIDRITNNQSVSELFN.

ATP contacts are provided by residues D40–E42 and R99–Q100. Residues H133 and D174 each coordinate Mg(2+). The active site involves K197. D-ribose 5-phosphate contacts are provided by residues R199, D223, and D227–T231.

Belongs to the ribose-phosphate pyrophosphokinase family. Class I subfamily. Homohexamer. Mg(2+) serves as cofactor.

The protein localises to the cytoplasm. It catalyses the reaction D-ribose 5-phosphate + ATP = 5-phospho-alpha-D-ribose 1-diphosphate + AMP + H(+). The protein operates within metabolic intermediate biosynthesis; 5-phospho-alpha-D-ribose 1-diphosphate biosynthesis; 5-phospho-alpha-D-ribose 1-diphosphate from D-ribose 5-phosphate (route I): step 1/1. Its function is as follows. Involved in the biosynthesis of the central metabolite phospho-alpha-D-ribosyl-1-pyrophosphate (PRPP) via the transfer of pyrophosphoryl group from ATP to 1-hydroxyl of ribose-5-phosphate (Rib-5-P). The sequence is that of Ribose-phosphate pyrophosphokinase from Fusobacterium nucleatum subsp. nucleatum (strain ATCC 25586 / DSM 15643 / BCRC 10681 / CIP 101130 / JCM 8532 / KCTC 2640 / LMG 13131 / VPI 4355).